Here is a 49-residue protein sequence, read N- to C-terminus: Large ribosomal subunit protein bL33B (49 aa).

It belongs to the bacterial ribosomal protein bL33 family.

The polypeptide is Large ribosomal subunit protein bL33B (Bacillus cytotoxicus (strain DSM 22905 / CIP 110041 / 391-98 / NVH 391-98)).